We begin with the raw amino-acid sequence, 322 residues long: HPr kinase/phosphorylase (322 aa).

Active-site residues include H143 and K164. Residue 158–165 (GRSGVGKS) coordinates ATP. Residue S165 coordinates Mg(2+). D182 (proton acceptor; for phosphorylation activity. Proton donor; for dephosphorylation activity) is an active-site residue. Positions 206–215 (MEIRGLGILN) are important for the catalytic mechanism of both phosphorylation and dephosphorylation. E207 serves as a coordination point for Mg(2+). R250 is an active-site residue. Residues 271 to 276 (PVKPGR) are important for the catalytic mechanism of dephosphorylation.

Belongs to the HPrK/P family. Homohexamer. The cofactor is Mg(2+).

It carries out the reaction [HPr protein]-L-serine + ATP = [HPr protein]-O-phospho-L-serine + ADP + H(+). The enzyme catalyses [HPr protein]-O-phospho-L-serine + phosphate + H(+) = [HPr protein]-L-serine + diphosphate. Catalyzes the ATP- as well as the pyrophosphate-dependent phosphorylation of a specific serine residue in HPr, a phosphocarrier protein of the phosphoenolpyruvate-dependent sugar phosphotransferase system (PTS). HprK/P also catalyzes the pyrophosphate-producing, inorganic phosphate-dependent dephosphorylation (phosphorolysis) of seryl-phosphorylated HPr (P-Ser-HPr). The protein is HPr kinase/phosphorylase of Leptospira biflexa serovar Patoc (strain Patoc 1 / Ames).